We begin with the raw amino-acid sequence, 193 residues long: ECF RNA polymerase sigma factor SigK (193 aa).

The segment at 35–101 (LYDRTRSRVY…RRAVDRVRSE (67 aa)) is sigma-70 factor domain-2. Positions 59 to 62 (ETTQ) match the Polymerase core binding motif. A sigma-70 factor domain-4 region spans residues 140–187 (MGSLSDLQREAIQLAYYEGLTYVQVSERLSANLATIKSRMRDGIRGLK). The H-T-H motif DNA-binding region spans 161 to 180 (YVQVSERLSANLATIKSRMR).

The protein belongs to the sigma-70 factor family. ECF subfamily. As to quaternary structure, interacts transiently with the RNA polymerase catalytic core formed by RpoA, RpoB, RpoC and RpoZ (2 alpha, 1 beta, 1 beta' and 1 omega subunit) to form the RNA polymerase holoenzyme that can initiate transcription. Interacts (via sigma-70 factor domain 4) with anti-sigma-K factor RskA.

Its function is as follows. Sigma factors are initiation factors that promote the attachment of RNA polymerase to specific initiation sites and are then released. Extracytoplasmic function (ECF) sigma factors are held in an inactive form by an anti-sigma factor until released by regulated intramembrane proteolysis. In Mycobacterium sp. (strain JLS), this protein is ECF RNA polymerase sigma factor SigK (sigK).